The sequence spans 79 residues: Hematopoietic cell signal transducer (79 aa).

The N-terminal stretch at 1–18 is a signal peptide; sequence MIHPGHILFLLLLPVAAA. Topologically, residues 19 to 34 are extracellular; the sequence is QTTPGSCSGCGSLSLP. The helical transmembrane segment at 35 to 55 threads the bilayer; sequence LLAGLVAADAVASPLIVGAVF. Topologically, residues 56-79 are cytoplasmic; sequence LCARPRRSPAQGDGKVYINMPGRG. Position 72 is a phosphotyrosine (Tyr-72). Residues 72–74 form a GRB2 binding site region; that stretch reads YIN. The interval 72 to 75 is PIK3R1 binding site; the sequence is YINM.

It belongs to the DAP10 family. Homodimer; Disulfide-linked. Heterohexamer composed of four subunits of HCST/DAP10 and two subunits of KLRK1. Interacts (via transmembrane domain) with KLRK1 (via transmembrane domain); the interaction is required for KLRK1 NK cell surface and induces NK cell-mediated cytotoxicity. Interacts with PIK3R1 and GRB2. Interacts with CLEC5A. Forms an CLEC5A/TYROBP/HCST trimolecular complex depending almost solely on TYROBP. Interacts with CD300H. Post-translationally, phosphorylated; PIK3R1 and GRB2 associate specifically with tyrosine-phosphorylated HCST. O-glycosylated.

It is found in the membrane. In terms of biological role, transmembrane adapter protein which associates with KLRK1 to form an activation receptor KLRK1-HCST in lymphoid and myeloid cells; this receptor plays a major role in triggering cytotoxicity against target cells expressing cell surface ligands such as MHC class I chain-related MICA and MICB, and UL16-binding proteins (ULBPs); these ligands are up-regulated by stress conditions and pathological state such as viral infection and tumor transformation. Functions as a docking site for PI3-kinase PIK3R1 and GRB2. Interaction of ULBPs with KLRK1-HCST triggers calcium mobilization and activation of the PIK3R1, MAP2K/ERK, and JAK2/STAT5 signaling pathways. Both PIK3R1 and GRB2 are required for full KLRK1-HCST-mediated activation and ultimate killing of target cells. In NK cells, KLRK1-HCST signaling directly induces cytotoxicity and enhances cytokine production initiated via DAP12/TYROBP-associated receptors. In T-cells, it provides primarily costimulation for TCR-induced signals. KLRK1-HCST receptor plays a role in immune surveillance against tumors and is required for cytolysis of tumors cells; indeed, melanoma cells that do not express KLRK1 ligands escape from immune surveillance mediated by NK cells. The protein is Hematopoietic cell signal transducer (HCST) of Macaca mulatta (Rhesus macaque).